A 192-amino-acid chain; its full sequence is Adenylate kinase (192 aa).

12–17 (GSGKTT) serves as a coordination point for ATP. An NMP region spans residues 34-63 (STGDLLRAEVASGSELGKTIDSFISKGNLV). AMP contacts are provided by residues Thr-35, Arg-40, 61-63 (NLV), 88-91 (GYPR), and Gln-95. An LID region spans residues 130 to 136 (GRNRGAD). Residue Arg-131 coordinates ATP. Positions 133 and 145 each coordinate AMP. Arg-173 lines the ATP pocket.

This sequence belongs to the adenylate kinase family. Monomer.

The protein resides in the cytoplasm. The enzyme catalyses AMP + ATP = 2 ADP. The protein operates within purine metabolism; AMP biosynthesis via salvage pathway; AMP from ADP: step 1/1. Its function is as follows. Catalyzes the reversible transfer of the terminal phosphate group between ATP and AMP. Plays an important role in cellular energy homeostasis and in adenine nucleotide metabolism. This Campylobacter jejuni subsp. jejuni serotype O:2 (strain ATCC 700819 / NCTC 11168) protein is Adenylate kinase.